Consider the following 258-residue polypeptide: Phosphoribosylaminoimidazole-succinocarboxamide synthase (258 aa).

Belongs to the SAICAR synthetase family.

The catalysed reaction is 5-amino-1-(5-phospho-D-ribosyl)imidazole-4-carboxylate + L-aspartate + ATP = (2S)-2-[5-amino-1-(5-phospho-beta-D-ribosyl)imidazole-4-carboxamido]succinate + ADP + phosphate + 2 H(+). Its pathway is purine metabolism; IMP biosynthesis via de novo pathway; 5-amino-1-(5-phospho-D-ribosyl)imidazole-4-carboxamide from 5-amino-1-(5-phospho-D-ribosyl)imidazole-4-carboxylate: step 1/2. In Sphingopyxis alaskensis (strain DSM 13593 / LMG 18877 / RB2256) (Sphingomonas alaskensis), this protein is Phosphoribosylaminoimidazole-succinocarboxamide synthase.